The following is a 321-amino-acid chain: MKPLNVIFAGTPDFAARHLQALIESQHKVIAVYTQPDRPAGRGKKLQSSPVKALALENDIPVLQPKSLRDETAQQELTALNADIMVVVAYGLILPKVVLDTPRLGCINVHGSILPRWRGAAPIQRALWAGDAETGVTIMQMDIGLDTGDMLLKTQLKIEDTDTSATLYEKLADQGPSALVEALAGIAADTLPAEKQDESLANYAEKLSKEEAQIDWSKSAEALWREIRAFNPWPVSHYQHAGNTIKVWQSHVSEKTSTAAAGTVISADKNGIDVATGNGVLTITSMQLPGKKPLSVADILNSRADWFTAGTQLNNAMGDQG.

112 to 115 is a (6S)-5,6,7,8-tetrahydrofolate binding site; the sequence is SILP.

The protein belongs to the Fmt family.

The catalysed reaction is L-methionyl-tRNA(fMet) + (6R)-10-formyltetrahydrofolate = N-formyl-L-methionyl-tRNA(fMet) + (6S)-5,6,7,8-tetrahydrofolate + H(+). Functionally, attaches a formyl group to the free amino group of methionyl-tRNA(fMet). The formyl group appears to play a dual role in the initiator identity of N-formylmethionyl-tRNA by promoting its recognition by IF2 and preventing the misappropriation of this tRNA by the elongation apparatus. The chain is Methionyl-tRNA formyltransferase from Shewanella piezotolerans (strain WP3 / JCM 13877).